Reading from the N-terminus, the 386-residue chain is Succinate--CoA ligase [ADP-forming] subunit beta (386 aa).

The region spanning lysine 9–glutamate 237 is the ATP-grasp domain. ATP contacts are provided by residues lysine 45, glycine 52 to glycine 54, valine 94, and glutamate 101. Mg(2+)-binding residues include asparagine 192 and aspartate 206. Substrate is bound by residues asparagine 258 and glycine 315 to threonine 317.

The protein belongs to the succinate/malate CoA ligase beta subunit family. As to quaternary structure, heterotetramer of two alpha and two beta subunits. It depends on Mg(2+) as a cofactor.

The enzyme catalyses succinate + ATP + CoA = succinyl-CoA + ADP + phosphate. It carries out the reaction GTP + succinate + CoA = succinyl-CoA + GDP + phosphate. It participates in carbohydrate metabolism; tricarboxylic acid cycle; succinate from succinyl-CoA (ligase route): step 1/1. In terms of biological role, succinyl-CoA synthetase functions in the citric acid cycle (TCA), coupling the hydrolysis of succinyl-CoA to the synthesis of either ATP or GTP and thus represents the only step of substrate-level phosphorylation in the TCA. The beta subunit provides nucleotide specificity of the enzyme and binds the substrate succinate, while the binding sites for coenzyme A and phosphate are found in the alpha subunit. In Deinococcus radiodurans (strain ATCC 13939 / DSM 20539 / JCM 16871 / CCUG 27074 / LMG 4051 / NBRC 15346 / NCIMB 9279 / VKM B-1422 / R1), this protein is Succinate--CoA ligase [ADP-forming] subunit beta.